An 837-amino-acid chain; its full sequence is Anaphase-promoting complex subunit 2 (837 aa).

A phosphoserine mark is found at Ser233, Ser329, Ser485, Ser549, and Ser712. Residues 478–508 (CLETGQDSEDDSGEPEDWVPDPVDADPVKSS) form a disordered region. Acidic residues predominate over residues 483–496 (QDSEDDSGEPEDWV). At Tyr825 the chain carries Phosphotyrosine.

It belongs to the cullin family. As to quaternary structure, the mammalian APC/C is composed at least of 14 distinct subunits ANAPC1, ANAPC2, CDC27/APC3, ANAPC4, ANAPC5, CDC16/APC6, ANAPC7, CDC23/APC8, ANAPC10, ANAPC11, CDC26/APC12, ANAPC13, ANAPC15 and ANAPC16 that assemble into a complex of at least 19 chains with a combined molecular mass of around 1.2 MDa; APC/C interacts with FZR1 and FBXO5. In the context of the APC/C complex, directly interacts with UBE2C and UBE2S. Interacts (via cullin domain) with ANAPC11 and with UBCH10. Interacts with NEUROD2. Interacts with FBXO43; the interaction is direct.

Its pathway is protein modification; protein ubiquitination. Its function is as follows. Together with the RING-H2 protein ANAPC11, constitutes the catalytic component of the anaphase promoting complex/cyclosome (APC/C), a cell cycle-regulated E3 ubiquitin ligase that controls progression through mitosis and the G1 phase of the cell cycle. The APC/C complex acts by mediating ubiquitination and subsequent degradation of target proteins: it mainly mediates the formation of 'Lys-11'-linked polyubiquitin chains and, to a lower extent, the formation of 'Lys-48'- and 'Lys-63'-linked polyubiquitin chains. The APC/C complex catalyzes assembly of branched 'Lys-11'-/'Lys-48'-linked branched ubiquitin chains on target proteins. The CDC20-APC/C complex positively regulates the formation of synaptic vesicle clustering at active zone to the presynaptic membrane in postmitotic neurons. CDC20-APC/C-induced degradation of NEUROD2 drives presynaptic differentiation. In Mus musculus (Mouse), this protein is Anaphase-promoting complex subunit 2 (Anapc2).